Consider the following 313-residue polypeptide: Porphobilinogen deaminase (313 aa).

S-(dipyrrolylmethanemethyl)cysteine is present on cysteine 242.

It belongs to the HMBS family. Monomer. The cofactor is dipyrromethane.

It catalyses the reaction 4 porphobilinogen + H2O = hydroxymethylbilane + 4 NH4(+). Its pathway is porphyrin-containing compound metabolism; protoporphyrin-IX biosynthesis; coproporphyrinogen-III from 5-aminolevulinate: step 2/4. Functionally, tetrapolymerization of the monopyrrole PBG into the hydroxymethylbilane pre-uroporphyrinogen in several discrete steps. The chain is Porphobilinogen deaminase from Pseudomonas putida (strain ATCC 700007 / DSM 6899 / JCM 31910 / BCRC 17059 / LMG 24140 / F1).